Reading from the N-terminus, the 780-residue chain is ATPase family gene 2 protein (780 aa).

Residues 1 to 23 show a composition bias toward low complexity; it reads MAPKSSSSGSKKKSSASSNSADA. The tract at residues 1-26 is disordered; the sequence is MAPKSSSSGSKKKSSASSNSADAKAS. ATP contacts are provided by residues 286 to 293 and 557 to 564; these read GPPGTGKT and GPPGCSKT.

The protein belongs to the AAA ATPase family. AFG2 subfamily. As to quaternary structure, homohexamer; ATP binding induces oligomerization. Forms a ring-shaped particle of about 12 nm diameter, that displays 6-fold radial symmetry. Associates with cytoplasmic pre-60S ribosomal particles containing ARX1, ALB1, RLP24 and NOG1. Binds to pre-60S ribosomal particles soon after their export from the nucleus and is released before REI1 and LSG1 are incorporated into the particles. Hexameric form interacts with RLP24 (via C-terminal); the interaction recruits AFG2 to pre-60S ribosomal particles and promotes AFG2 ATPase activity and RLP24 release from pre-60S ribosomal particles. Interacts (via N-terminus) with nucleoporin NUP116 (via N-terminus); the interaction is required for RLP24 release from pre-60S ribosomal particles.

It localises to the cytoplasm. It carries out the reaction ATP + H2O = ADP + phosphate + H(+). Its activity is regulated as follows. The hexamer is activated by RLP24 during pre-60S ribosomal particle maturation; RLP24 activates ATPase activity of both ATP-binding regions and increases cooperativity between AFG2 subunits. The second ATP-binding region is inhibited by diazaborine; the inhibition requires prior ATP binding specifically to the second ATP-binding region. Its function is as follows. ATP-dependent chaperone which uses the energy provided by ATP hydrolysis to generate mechanical force to disassemble protein complexes. Plays an essential role in the cytoplasmic maturation steps of pre-60S ribosomal particles by promoting the release of shuttling protein RLP24 from the pre-ribosomal particles. This step facilitates the subsequent release of other shuttling proteins such as NOG1 and allows the transition of the pre-ribosomal particles to later maturation forms that bind REI1. Essential for viability. In Saccharomyces cerevisiae (strain ATCC 204508 / S288c) (Baker's yeast), this protein is ATPase family gene 2 protein.